The primary structure comprises 447 residues: Tubulin beta chain (447 aa).

The GTP site is built by Gln-11, Glu-69, Ser-138, Gly-142, Thr-143, Gly-144, Asn-204, and Asn-226. Mg(2+) is bound at residue Glu-69.

It belongs to the tubulin family. Dimer of alpha and beta chains. A typical microtubule is a hollow water-filled tube with an outer diameter of 25 nm and an inner diameter of 15 nM. Alpha-beta heterodimers associate head-to-tail to form protofilaments running lengthwise along the microtubule wall with the beta-tubulin subunit facing the microtubule plus end conferring a structural polarity. Microtubules usually have 13 protofilaments but different protofilament numbers can be found in some organisms and specialized cells. Mg(2+) serves as cofactor.

It is found in the cytoplasm. It localises to the cytoskeleton. In terms of biological role, tubulin is the major constituent of microtubules, a cylinder consisting of laterally associated linear protofilaments composed of alpha- and beta-tubulin heterodimers. Microtubules grow by the addition of GTP-tubulin dimers to the microtubule end, where a stabilizing cap forms. Below the cap, tubulin dimers are in GDP-bound state, owing to GTPase activity of alpha-tubulin. This chain is Tubulin beta chain, found in Trichophyton rubrum (Athlete's foot fungus).